A 160-amino-acid chain; its full sequence is 2-C-methyl-D-erythritol 2,4-cyclodiphosphate synthase (160 aa).

Positions 11 and 13 each coordinate a divalent metal cation. 4-CDP-2-C-methyl-D-erythritol 2-phosphate-binding positions include 11 to 13 (DVH) and 37 to 38 (HS). H45 provides a ligand contact to a divalent metal cation. 4-CDP-2-C-methyl-D-erythritol 2-phosphate contacts are provided by residues 59 to 61 (DIG) and R145.

Belongs to the IspF family. In terms of assembly, homotrimer. Requires a divalent metal cation as cofactor.

The catalysed reaction is 4-CDP-2-C-methyl-D-erythritol 2-phosphate = 2-C-methyl-D-erythritol 2,4-cyclic diphosphate + CMP. Its pathway is isoprenoid biosynthesis; isopentenyl diphosphate biosynthesis via DXP pathway; isopentenyl diphosphate from 1-deoxy-D-xylulose 5-phosphate: step 4/6. Involved in the biosynthesis of isopentenyl diphosphate (IPP) and dimethylallyl diphosphate (DMAPP), two major building blocks of isoprenoid compounds. Catalyzes the conversion of 4-diphosphocytidyl-2-C-methyl-D-erythritol 2-phosphate (CDP-ME2P) to 2-C-methyl-D-erythritol 2,4-cyclodiphosphate (ME-CPP) with a corresponding release of cytidine 5-monophosphate (CMP). The sequence is that of 2-C-methyl-D-erythritol 2,4-cyclodiphosphate synthase from Neisseria gonorrhoeae (strain ATCC 700825 / FA 1090).